Consider the following 39-residue polypeptide: Photosystem II reaction center protein J (39 aa).

The helical transmembrane segment at 9-29 (LWLVGLVGGFAVITIVSLFIY) threads the bilayer.

This sequence belongs to the PsbJ family. PSII is composed of 1 copy each of membrane proteins PsbA, PsbB, PsbC, PsbD, PsbE, PsbF, PsbH, PsbI, PsbJ, PsbK, PsbL, PsbM, PsbT, PsbX, PsbY, PsbZ, Psb30/Ycf12, at least 3 peripheral proteins of the oxygen-evolving complex and a large number of cofactors. It forms dimeric complexes.

Its subcellular location is the plastid. The protein resides in the chloroplast thylakoid membrane. In terms of biological role, one of the components of the core complex of photosystem II (PSII). PSII is a light-driven water:plastoquinone oxidoreductase that uses light energy to abstract electrons from H(2)O, generating O(2) and a proton gradient subsequently used for ATP formation. It consists of a core antenna complex that captures photons, and an electron transfer chain that converts photonic excitation into a charge separation. In Thalassiosira pseudonana (Marine diatom), this protein is Photosystem II reaction center protein J.